We begin with the raw amino-acid sequence, 850 residues long: Pierisin (850 aa).

Ricin B-type lectin domains lie at 267–409 (GEFM…WNII), 413–560 (FRPI…WDIK), and 564–707 (YQYV…WYLK).

Belongs to the pierisin ADP-ribosyltransferase family.

It catalyses the reaction a 2'-deoxyguanosine in DNA + NAD(+) = an N(2)-(ADP-L-ribosyl)-2'-deoxyguanosine in DNA + nicotinamide + H(+). ADP-ribosylates double-stranded DNA by targeting the N2 amino group of dG residues. Induces apoptosis in a range of human cell lines. May play a role in destroying cells during pupation and/or defense against parasites. The chain is Pierisin from Pieris brassicae (White butterfly).